Reading from the N-terminus, the 690-residue chain is Protein arginine N-methyltransferase 7 (690 aa).

SAM-dependent MTase PRMT-type domains follow at residues 14 to 357 (QNSW…YSLW) and 366 to 690 (TKSV…QKKL).

It belongs to the class I-like SAM-binding methyltransferase superfamily. Protein arginine N-methyltransferase family. PRMT7 subfamily.

Its function is as follows. Essential arginine methyltransferase that can both catalyze the formation of omega-N monomethylarginine (MMA) and symmetrical dimethylarginine (sDMA). Specifically mediates the symmetrical dimethylation of arginine residues in the small nuclear ribonucleoproteins SmD1 and SmD3. This Drosophila sechellia (Fruit fly) protein is Protein arginine N-methyltransferase 7 (Art7).